Here is a 199-residue protein sequence, read N- to C-terminus: Superoxide dismutase [Mn/Fe] (199 aa).

His-27, His-81, Asp-161, and His-165 together coordinate Fe(3+). Positions 27, 81, 161, and 165 each coordinate Mn(2+).

It belongs to the iron/manganese superoxide dismutase family. As to quaternary structure, homodimer. The cofactor is Mn(2+). Fe(3+) is required as a cofactor.

The enzyme catalyses 2 superoxide + 2 H(+) = H2O2 + O2. In terms of biological role, destroys superoxide anion radicals which are normally produced within the cells and which are toxic to biological systems. Catalyzes the dismutation of superoxide anion radicals into O2 and H2O2 by successive reduction and oxidation of the transition metal ion at the active site. This chain is Superoxide dismutase [Mn/Fe] (sodA), found in Staphylococcus epidermidis.